Reading from the N-terminus, the 177-residue chain is 3-hydroxydecanoyl-[acyl-carrier-protein] dehydratase (177 aa).

The active site involves His-76.

This sequence belongs to the thioester dehydratase family. FabA subfamily. In terms of assembly, homodimer.

It localises to the cytoplasm. It catalyses the reaction a (3R)-hydroxyacyl-[ACP] = a (2E)-enoyl-[ACP] + H2O. It carries out the reaction (3R)-hydroxydecanoyl-[ACP] = (2E)-decenoyl-[ACP] + H2O. The enzyme catalyses (2E)-decenoyl-[ACP] = (3Z)-decenoyl-[ACP]. It participates in lipid metabolism; fatty acid biosynthesis. Functionally, necessary for the introduction of cis unsaturation into fatty acids. Catalyzes the dehydration of (3R)-3-hydroxydecanoyl-ACP to E-(2)-decenoyl-ACP and then its isomerization to Z-(3)-decenoyl-ACP. Can catalyze the dehydratase reaction for beta-hydroxyacyl-ACPs with saturated chain lengths up to 16:0, being most active on intermediate chain length. In Mannheimia succiniciproducens (strain KCTC 0769BP / MBEL55E), this protein is 3-hydroxydecanoyl-[acyl-carrier-protein] dehydratase.